We begin with the raw amino-acid sequence, 114 residues long: MCVATCLCTFAYVLAKSDEGENLISKVEETQRGCIEIGGDCDGYLDKSYCQCCRNNGFCSCYKVPEWFGYKVGCKCSVDWNFVGWCRLKQFCPGGSQNPSLCKDPNPRRRRHGK.

Positions Met1–Ala15 are cleaved as a signal peptide. A propeptide spanning residues Lys16–Arg32 is cleaved from the precursor. 5 cysteine pairs are disulfide-bonded: Cys34-Cys53, Cys41-Cys59, Cys50-Cys86, Cys52-Cys76, and Cys61-Cys74. Residues Gly95–Lys114 form a disordered region.

The protein belongs to the neurotoxin 04 (omega-agtx) family. 03 (type II/III omega-agtx) subfamily. In terms of tissue distribution, expressed by the venom gland.

Its subcellular location is the secreted. Its function is as follows. Inhibits voltage-gated calcium channels (Cav). The polypeptide is U10-agatoxin-Ao1a (Agelena orientalis (Funnel-web spider)).